Reading from the N-terminus, the 272-residue chain is PHD finger protein ALFIN-LIKE 6 (272 aa).

Over residues 1–23 (MEGGGGGGGGGGGGGGGGGGGGA) the composition is skewed to gly residues. Disordered regions lie at residues 1–24 (MEGGGGGGGGGGGGGGGGGGGGAP) and 162–218 (QAKE…DNTL). A compositionally biased stretch (low complexity) spans 168 to 182 (PNSSSKSNKPSSKVQ). A compositionally biased stretch (basic and acidic residues) spans 183–200 (SKAESRSKSKLSAPKDEE). The segment covering 201-214 (GSGDDEGEEEEDDH) has biased composition (acidic residues). The segment at 216–268 (NTLCGTCGTNDGKDEFWICCDNCEKWYHGKCVKITPARAEHIKQYKCPDCTNK) adopts a PHD-type zinc-finger fold.

Belongs to the Alfin family.

Its subcellular location is the nucleus. Histone-binding component that specifically recognizes H3 tails trimethylated on 'Lys-4' (H3K4me3), which mark transcription start sites of virtually all active genes. This chain is PHD finger protein ALFIN-LIKE 6, found in Oryza sativa subsp. indica (Rice).